A 283-amino-acid chain; its full sequence is Pantothenate synthetase (283 aa).

ATP is bound at residue 30-37 (MGNLHDGH). Catalysis depends on His-37, which acts as the Proton donor. Gln-61 is a (R)-pantoate binding site. Residue Gln-61 participates in beta-alanine binding. An ATP-binding site is contributed by 149 to 152 (GEKD). Gln-155 serves as a coordination point for (R)-pantoate. Position 186-189 (186-189 (LSSR)) interacts with ATP.

The protein belongs to the pantothenate synthetase family. In terms of assembly, homodimer.

Its subcellular location is the cytoplasm. It carries out the reaction (R)-pantoate + beta-alanine + ATP = (R)-pantothenate + AMP + diphosphate + H(+). It participates in cofactor biosynthesis; (R)-pantothenate biosynthesis; (R)-pantothenate from (R)-pantoate and beta-alanine: step 1/1. In terms of biological role, catalyzes the condensation of pantoate with beta-alanine in an ATP-dependent reaction via a pantoyl-adenylate intermediate. The sequence is that of Pantothenate synthetase from Escherichia coli O157:H7.